The sequence spans 381 residues: Malonyl-CoA-acyl carrier protein transacylase, mitochondrial (381 aa).

Active-site residues include serine 151 and histidine 268. Lysine 312 is subject to N6-succinyllysine.

This sequence belongs to the type II malonyltransferase family. In terms of tissue distribution, expressed in retinal ganglion cells.

Its subcellular location is the mitochondrion. The enzyme catalyses holo-[ACP] + malonyl-CoA = malonyl-[ACP] + CoA. It functions in the pathway lipid metabolism; fatty acid biosynthesis. Functionally, catalyzes the transfer of a malonyl moiety from malonyl-CoA to the free thiol group of the phosphopantetheine arm of the mitochondrial ACP protein (NDUFAB1). This suggests the existence of the biosynthesis of fatty acids in mitochondria. This chain is Malonyl-CoA-acyl carrier protein transacylase, mitochondrial, found in Mus musculus (Mouse).